The following is a 400-amino-acid chain: MQRRQRAPPASQPAQDGGRSEDVEVQFSAGRLGSAAPAGPPARGTAEDEERLEREHFWKVINAFRYYGTSMHERVNRTERQFRSLPENQQKLLPQFPLHLDKIRKCIDHNQEILLTIVNDCIHMFENKEYGEDANGKIMPASTFDMDKLKSTLKQFVRDWSETGKAERDACYKPIIKEIIKNFPKERWDPSKVNILVPGAGLGRLAWEVAMLGYACQGNEWSFFMLFSSNFVLNRCSEINKYKLYPWIHQFSNNRRSADQIRPILFPDVDPHSLPPGSNFSMTAGDFQEIYSECNAWDCIATCFFIDTAHNVIDYIDTIWRILKPGGIWINLGPLLYHFENLANELSIELSYEDIKNVVLQYGFQLEVEKESVLSTYTVNDLSMMKYYYECVLFVVRKPQ.

Residues methionine 1 to arginine 51 are disordered. Low complexity predominate over residues serine 28–glycine 44. S-adenosyl-L-methionine-binding residues include glutamine 155, arginine 158, glycine 199, glutamate 220, aspartate 286, phenylalanine 287, and cysteine 303. Aspartate 307 lines the carnosine pocket. Residue tyrosine 315 coordinates S-adenosyl-L-methionine. Carnosine is bound by residues histidine 338 and tyrosine 389.

It belongs to the carnosine N-methyltransferase family. As to quaternary structure, homodimer. Each monomer accommodates one molecule of carnosine in its active pocket, precisely anchoring the histidine imidazole ring such that only N1 is exposed and deprotonated for methylation.

Its subcellular location is the cytoplasm. The protein localises to the cytosol. It is found in the nucleus. It catalyses the reaction carnosine + S-adenosyl-L-methionine = anserine + S-adenosyl-L-homocysteine + H(+). N-methyltransferase that catalyzes the formation of anserine (beta-alanyl-N(Pi)-methyl-L-histidine) from carnosine. Anserine, a methylated derivative of carnosine (beta-alanyl-L-histidine), is an abundant constituent of vertebrate skeletal muscles. Also methylates other L-histidine-containing di- and tripeptides such as Gly-Gly-His, Gly-His and homocarnosine (GABA-His). This Mus musculus (Mouse) protein is Carnosine N-methyltransferase.